Consider the following 90-residue polypeptide: Small ribosomal subunit protein uS15c (90 aa).

It belongs to the universal ribosomal protein uS15 family. As to quaternary structure, part of the 30S ribosomal subunit.

Its subcellular location is the plastid. It is found in the chloroplast. This Gossypium barbadense (Sea Island cotton) protein is Small ribosomal subunit protein uS15c (rps15).